The following is a 505-amino-acid chain: Trans-cinnamate 4-monooxygenase (505 aa).

A helical membrane pass occupies residues 3 to 23 (LLLLEKTLLALFLAAITAITI). (E)-cinnamate is bound by residues 213-218 (RSRLAQ) and Ala306. Cys447 is a heme binding site.

Belongs to the cytochrome P450 family. The cofactor is heme.

Its subcellular location is the membrane. The enzyme catalyses (E)-cinnamate + reduced [NADPH--hemoprotein reductase] + O2 = (E)-4-coumarate + oxidized [NADPH--hemoprotein reductase] + H2O + H(+). It participates in phenylpropanoid metabolism; trans-4-coumarate biosynthesis; trans-4-coumarate from trans-cinnamate: step 1/1. Its function is as follows. Catalyzes the first oxidative step of the phenylpropanoid pathway in higher plants by transforming trans-cinnamate into p-coumarate. The compounds formed by this pathway are essential components for lignification, pollination, and defense against ultraviolet light, predators and pathogens. The protein is Trans-cinnamate 4-monooxygenase (CYP73A9) of Pisum sativum (Garden pea).